The chain runs to 325 residues: Ribosomal RNA small subunit methyltransferase H (325 aa).

S-adenosyl-L-methionine is bound by residues 33-35, Asp-52, Leu-87, Asp-101, and Gln-108; that span reads GGH. The segment at 285–325 is disordered; it reads AEPAGEVEKADNPRAASVRLRAAERTAPNPDRTQPTIGGAS. Positions 315–325 are enriched in polar residues; the sequence is DRTQPTIGGAS.

This sequence belongs to the methyltransferase superfamily. RsmH family.

Its subcellular location is the cytoplasm. The catalysed reaction is cytidine(1402) in 16S rRNA + S-adenosyl-L-methionine = N(4)-methylcytidine(1402) in 16S rRNA + S-adenosyl-L-homocysteine + H(+). In terms of biological role, specifically methylates the N4 position of cytidine in position 1402 (C1402) of 16S rRNA. This is Ribosomal RNA small subunit methyltransferase H from Frankia alni (strain DSM 45986 / CECT 9034 / ACN14a).